The following is a 213-amino-acid chain: High frequency lysogenization protein HflD homolog (213 aa).

The protein belongs to the HflD family.

It localises to the cytoplasm. The protein localises to the cell inner membrane. The polypeptide is High frequency lysogenization protein HflD homolog (Nitrosococcus oceani (strain ATCC 19707 / BCRC 17464 / JCM 30415 / NCIMB 11848 / C-107)).